A 477-amino-acid chain; its full sequence is Salivary plasminogen activator alpha 1 (477 aa).

The N-terminal stretch at 1-36 is a signal peptide; that stretch reads MVNTMKTKLLCVLLLCGAVFSLPRQETYRQLARGSR. Positions 40 to 82 constitute a Fibronectin type-I domain; the sequence is VACKDEITQMTYRRQESWLRPEVRSKRVEHCQCDRGQARCHTV. Cystine bridges form between cysteine 42-cysteine 72, cysteine 70-cysteine 79, cysteine 87-cysteine 98, cysteine 92-cysteine 109, cysteine 111-cysteine 120, cysteine 128-cysteine 209, cysteine 149-cysteine 191, cysteine 180-cysteine 204, cysteine 214-cysteine 345, cysteine 257-cysteine 273, cysteine 265-cysteine 334, cysteine 359-cysteine 434, cysteine 391-cysteine 407, and cysteine 424-cysteine 452. The EGF-like domain occupies 83-121; that stretch reads PVNSCSEPRCFNGGTCWQAVYFSDFVCQCPAGYTGKRCE. One can recognise a Kringle domain in the interval 128-209; the sequence is CYEGQGVTYR…TSESCSVPVC (82 aa). Residue asparagine 153 is glycosylated (N-linked (GlcNAc...) asparagine). Positions 226 to 476 constitute a Peptidase S1 domain; the sequence is STGGLFTDIT…YLGWIRDNMH (251 aa). Residues histidine 272 and aspartate 321 each act as charge relay system in the active site. N-linked (GlcNAc...) asparagine glycosylation is present at asparagine 398. The active-site Charge relay system is the serine 428.

This sequence belongs to the peptidase S1 family. As to quaternary structure, monomer.

The protein localises to the secreted. It carries out the reaction Specific cleavage of Arg-|-Val bond in plasminogen to form plasmin.. Activity toward plasminogen is stimulated in the presence of fibrin I. Probably essential to support the feeding habits of this exclusively haematophagous animal. Potent thrombolytic agent. This is Salivary plasminogen activator alpha 1 from Desmodus rotundus (Vampire bat).